The sequence spans 365 residues: Myocyte-specific enhancer factor 2B (365 aa).

Residues 3–57 enclose the MADS-box domain; it reads RKKIQISRILDQRNRQVTFTKRKFGLMKKAYELSVLCDCEIALIIFNSANRLFQY. Residues 58-86 constitute a DNA-binding region (mef2-type); sequence ASTDMDRVLLKYTEYSEPHESRTNTDILE. Disordered stretches follow at residues 94 to 124, 142 to 309, and 321 to 365; these read GLDGPELEPDEGPEEPGEKFRRLAGEGGDPA, VVYG…SPGP, and AGCP…KTQQ. A compositionally biased stretch (acidic residues) spans 98–108; the sequence is PELEPDEGPEE. Over residues 223 to 240 the composition is skewed to polar residues; the sequence is NTSRSLYSGLQNPCSTAT. 2 stretches are compositionally biased toward low complexity: residues 277-289 and 326-346; these read PQSASSLSASLRP and PTAGPGRRSPGGTSPERSPGT. Polar residues predominate over residues 354–365; that stretch reads TSLQASSEKTQQ.

The protein belongs to the MEF2 family. As to quaternary structure, interacts with HDAC7. Heterodimer. Interacts with HDAC9. Expressed in skeletal and cardiac muscle and brain.

The protein resides in the nucleus. In terms of biological role, transcriptional activator which binds specifically to the MEF2 element, 5'-YTA[AT](4)TAR-3', found in numerous muscle-specific genes. Activates transcription via this element. May be involved in muscle-specific and/or growth factor-related transcription. The protein is Myocyte-specific enhancer factor 2B (MEF2B) of Homo sapiens (Human).